A 100-amino-acid polypeptide reads, in one-letter code: Urease subunit gamma (100 aa).

It belongs to the urease gamma subunit family. As to quaternary structure, heterotrimer of UreA (gamma), UreB (beta) and UreC (alpha) subunits. Three heterotrimers associate to form the active enzyme.

It localises to the cytoplasm. The catalysed reaction is urea + 2 H2O + H(+) = hydrogencarbonate + 2 NH4(+). The protein operates within nitrogen metabolism; urea degradation; CO(2) and NH(3) from urea (urease route): step 1/1. The sequence is that of Urease subunit gamma from Prochlorococcus marinus (strain MIT 9303).